The primary structure comprises 280 residues: Retinoschisin (280 aa).

Residues 1-23 (MHLPREAFLLALAGAFIFPSSQQ) form the signal peptide. The region spanning 119–275 (CPYHRPLGFE…IALRLELLLC (157 aa)) is the F5/8 type C domain. Disulfide bonds link Cys119-Cys275 and Cys166-Cys198.

Homooctamer of 4 homodimers; disulfide-linked. The homooctamer has a flat, cogwheel structure with a diameter of about 14 nm. Two stacked octamers can assemble to form a hexadecamer.

It is found in the secreted. It localises to the cell membrane. Its function is as follows. Binds negatively charged membrane lipids, such as phosphatidylserine and phosphoinositides. May play a role in cell-cell adhesion processes in the retina, via homomeric interaction between octamers present on the surface of two neighboring cells. Required for normal structure and function of the retina. The chain is Retinoschisin (xlrs1) from Takifugu rubripes (Japanese pufferfish).